A 168-amino-acid chain; its full sequence is ASQKRPSQRHGSKYLATASTMDHARHGFLPRHRDTGILDSIGRFFSSDRGAPKRGSGKDHAARTTHYGSLPQKSGHRPQDENPVVHFFKNIVTPRTPPPSQGKGRGTVLSRFSWGAEGQKPGFGYGGRAADYKSAHKGLKGADAQGTLSRLFKLGGRDSRSGSPMARR.

Alanine 1 is modified (N-acetylalanine). Serine 7 and serine 12 each carry phosphoserine. Tyrosine 14 bears the Phosphotyrosine mark. Threonine 17 carries the post-translational modification Phosphothreonine. Serine 19 is modified (phosphoserine). Position 20 is a phosphothreonine (threonine 20). Citrulline is present on residues arginine 25 and arginine 31. Threonine 35 carries the phosphothreonine modification. Position 40 is a phosphoserine (serine 40). The disordered stretch occupies residues glycine 42–valine 84. An omega-N-methylarginine mark is found at arginine 43 and arginine 49. The segment at phenylalanine 45–histidine 86 is induces experimental autoimmune encephalomyelitis (EAE). At serine 56 the chain carries Phosphoserine. A Phosphothreonine modification is found at threonine 65. Residue tyrosine 67 is modified to Phosphotyrosine. Serine 74 carries the post-translational modification Phosphoserine. Residues threonine 93 and threonine 96 each carry the phosphothreonine modification. At glutamine 101 the chain carries Deamidated glutamine; partial. Residue arginine 105 is modified to Omega-N-methylarginine; alternate. A Symmetric dimethylarginine; alternate modification is found at arginine 105. Phosphoserine is present on serine 113. Residue lysine 120 is modified to N6-acetyllysine. The residue at position 128 (arginine 128) is a Citrulline. Position 145 is a deamidated glutamine (glutamine 145). Arginine 157 is subject to Citrulline. At serine 159 the chain carries Phosphoserine. Serine 163 carries the post-translational modification Phosphoserine; by UHMK1. Arginine 168 is subject to Citrulline.

Belongs to the myelin basic protein family. Homodimer. As in other animals, several charge isomers may be produced as a result of optional post-translational modifications, such as phosphorylation of serine or threonine residues, deamidation of glutamine or asparagine residues, citrullination and methylation of arginine residues. Post-translationally, phosphorylated by TAOK2, VRK2, MAPK11, MAPK12, MAPK14 and MINK1. In terms of processing, proteolytically cleaved in B cell lysosomes by cathepsin CTSG which degrades the major immunogenic MBP epitope and prevents the activation of MBP-specific autoreactive T cells. As to expression, found in both the central and the peripheral nervous system.

It localises to the myelin membrane. In terms of biological role, is, with PLP, the most abundant protein component of the myelin membrane in the CNS. Has a role in both the formation and stabilization of this compact multilayer arrangement of bilayers. Each splice variant and charge isomer may have a specialized function in the assembly of an optimized, biochemically functional myelin membrane. This Oryctolagus cuniculus (Rabbit) protein is Myelin basic protein (MBP).